Consider the following 473-residue polypeptide: MAAALARRGGGGLARALARGRGMCSATAAERAAGAALTSEELMRMERERSAHNYHPIPVVFSKGEGSHILDPEGNKYIDFLSAYSAVNQGHCHPKVLRALKEQAERLTLSSRAFYNDKFPIFAEYLTSMFGYEMMLPMNTGAEGVETAIKLVRKWGYEKKKIPKNEALIVSCCGCFHGRTLGVISMSCDNDATRGFGPLVPGHLKVDFGDTDGLEKIFKDHGERICGFLFEPIQGEAGVIIPPDGYLKAVRDLCSRHNILMIADEIQTGIARTGKMLACDWENIRPDVVILGKALGAGVVPVSAVLADKDIMLCIKPGEHGSTFGGNPLASAVAVASLKVVTDEGLVERAAKLGQEFRDQLQKVQQRFPQIIREVRGRGLLNAVDLSNEALSPASAYDICIKLKERGVLAKPTHDTIIRLAPPLSISPEELAEASKAFSDVLEHDLPQLQKQIKKTESAAEKQSCDRCGRDLY.

The N-terminal 32 residues, 1-32, are a transit peptide targeting the mitochondrion; sequence MAAALARRGGGGLARALARGRGMCSATAAERA. Position 293 is an N6-(pyridoxal phosphate)lysine (lysine 293).

This sequence belongs to the class-III pyridoxal-phosphate-dependent aminotransferase family. Homotetramer. Pyridoxal 5'-phosphate is required as a cofactor.

Its subcellular location is the mitochondrion matrix. The catalysed reaction is a 2-oxocarboxylate + L-ornithine = L-glutamate 5-semialdehyde + an L-alpha-amino acid. Its pathway is amino-acid biosynthesis; L-proline biosynthesis; L-glutamate 5-semialdehyde from L-ornithine: step 1/1. Functionally, confers drought and oxidative stress tolerance mainly through enhancing ROS-scavenging capacity and Pro pre-accumulation. The sequence is that of Ornithine aminotransferase, mitochondrial (OAT) from Oryza sativa subsp. japonica (Rice).